The following is a 792-amino-acid chain: Molybdenum cofactor sulfurase (792 aa).

Lys246 is modified (N6-(pyridoxal phosphate)lysine). Cys414 is an active-site residue. Positions 646–792 constitute an MOSC domain; it reads LRLLRQSSQR…LTCGDVVVVT (147 aa). Residue Ser748 is modified to Phosphoserine.

This sequence belongs to the class-V pyridoxal-phosphate-dependent aminotransferase family. MOCOS subfamily. Requires pyridoxal 5'-phosphate as cofactor.

The enzyme catalyses Mo-molybdopterin + L-cysteine + AH2 = thio-Mo-molybdopterin + L-alanine + A + H2O. The protein operates within cofactor biosynthesis; molybdopterin biosynthesis. Sulfurates the molybdenum cofactor. Sulfation of molybdenum is essential for xanthine dehydrogenase (XDH) and aldehyde oxidase (ADO) enzymes in which molybdenum cofactor is liganded by 1 oxygen and 1 sulfur atom in active form. The chain is Molybdenum cofactor sulfurase from Drosophila pseudoobscura pseudoobscura (Fruit fly).